The primary structure comprises 327 residues: Transaldolase (327 aa).

Catalysis depends on lysine 132, which acts as the Schiff-base intermediate with substrate.

This sequence belongs to the transaldolase family. Type 1 subfamily. Homodimer.

It localises to the cytoplasm. It carries out the reaction D-sedoheptulose 7-phosphate + D-glyceraldehyde 3-phosphate = D-erythrose 4-phosphate + beta-D-fructose 6-phosphate. It functions in the pathway carbohydrate degradation; pentose phosphate pathway; D-glyceraldehyde 3-phosphate and beta-D-fructose 6-phosphate from D-ribose 5-phosphate and D-xylulose 5-phosphate (non-oxidative stage): step 2/3. Transaldolase is important for the balance of metabolites in the pentose-phosphate pathway. The protein is Transaldolase of Chlamydia felis (strain Fe/C-56) (Chlamydophila felis).